A 361-amino-acid polypeptide reads, in one-letter code: Chorismate synthase (361 aa).

The interval 37–59 (TEADLQHDLDRRRPGTSRYTTQR) is disordered. The span at 40-49 (DLQHDLDRRR) shows a compositional bias: basic and acidic residues. NADP(+)-binding residues include arginine 48 and arginine 54. FMN-binding positions include 125-127 (RSS), 238-239 (NA), glycine 278, 293-297 (KPTSS), and arginine 319.

Belongs to the chorismate synthase family. Homotetramer. The cofactor is FMNH2.

The catalysed reaction is 5-O-(1-carboxyvinyl)-3-phosphoshikimate = chorismate + phosphate. It participates in metabolic intermediate biosynthesis; chorismate biosynthesis; chorismate from D-erythrose 4-phosphate and phosphoenolpyruvate: step 7/7. In terms of biological role, catalyzes the anti-1,4-elimination of the C-3 phosphate and the C-6 proR hydrogen from 5-enolpyruvylshikimate-3-phosphate (EPSP) to yield chorismate, which is the branch point compound that serves as the starting substrate for the three terminal pathways of aromatic amino acid biosynthesis. This reaction introduces a second double bond into the aromatic ring system. The protein is Chorismate synthase of Serratia proteamaculans (strain 568).